Here is a 364-residue protein sequence, read N- to C-terminus: UDP-N-acetylglucosamine--N-acetylmuramyl-(pentapeptide) pyrophosphoryl-undecaprenol N-acetylglucosamine transferase (364 aa).

Residues 10–12 (TGG), N124, R166, S196, and Q297 contribute to the UDP-N-acetyl-alpha-D-glucosamine site.

This sequence belongs to the glycosyltransferase 28 family. MurG subfamily.

The protein localises to the cell membrane. The catalysed reaction is di-trans,octa-cis-undecaprenyl diphospho-N-acetyl-alpha-D-muramoyl-L-alanyl-D-glutamyl-meso-2,6-diaminopimeloyl-D-alanyl-D-alanine + UDP-N-acetyl-alpha-D-glucosamine = di-trans,octa-cis-undecaprenyl diphospho-[N-acetyl-alpha-D-glucosaminyl-(1-&gt;4)]-N-acetyl-alpha-D-muramoyl-L-alanyl-D-glutamyl-meso-2,6-diaminopimeloyl-D-alanyl-D-alanine + UDP + H(+). It participates in cell wall biogenesis; peptidoglycan biosynthesis. Its function is as follows. Cell wall formation. Catalyzes the transfer of a GlcNAc subunit on undecaprenyl-pyrophosphoryl-MurNAc-pentapeptide (lipid intermediate I) to form undecaprenyl-pyrophosphoryl-MurNAc-(pentapeptide)GlcNAc (lipid intermediate II). This Caldanaerobacter subterraneus subsp. tengcongensis (strain DSM 15242 / JCM 11007 / NBRC 100824 / MB4) (Thermoanaerobacter tengcongensis) protein is UDP-N-acetylglucosamine--N-acetylmuramyl-(pentapeptide) pyrophosphoryl-undecaprenol N-acetylglucosamine transferase.